Here is a 355-residue protein sequence, read N- to C-terminus: Probable sugar phosphate/phosphate translocator At3g10290 (355 aa).

Residues 19–51 (QKKQPNLSISSTTKMNKKNPDQKSDMSSSSSSP) form a disordered region. Residues 22–32 (QPNLSISSTTK) are compositionally biased toward polar residues. 10 helical membrane-spanning segments follow: residues 55–75 (TLFI…VLLL), 89–109 (IFLT…SIVF), 124–144 (FLKV…GNIS), 150–170 (VSFN…FAYI), 177–197 (AWVT…ASGG), 198–218 (EPGF…ARAF), 239–259 (LMLY…IFME), 277–297 (YILL…NFLV), 305–325 (TLQV…ILLF), and 328–348 (PVTV…VAYG).

Belongs to the TPT transporter family. TPT (TC 2.A.7.9) subfamily.

It localises to the membrane. This Arabidopsis thaliana (Mouse-ear cress) protein is Probable sugar phosphate/phosphate translocator At3g10290.